The sequence spans 860 residues: Leucine--tRNA ligase (860 aa).

Positions 42-52 (PYPSGRLHMGH) match the 'HIGH' region motif. The 'KMSKS' region motif lies at 619 to 623 (KMSKS). Residue Lys-622 participates in ATP binding.

The protein belongs to the class-I aminoacyl-tRNA synthetase family.

The protein localises to the cytoplasm. The catalysed reaction is tRNA(Leu) + L-leucine + ATP = L-leucyl-tRNA(Leu) + AMP + diphosphate. The chain is Leucine--tRNA ligase from Serratia proteamaculans (strain 568).